Consider the following 150-residue polypeptide: Ribonuclease K6 (150 aa).

The N-terminal stretch at 1–23 (MVLCFPLLLLLLVLWGPVCPLHA) is a signal peptide. H38 (proton acceptor) is an active-site residue. 4 disulfides stabilise this stretch: C46-C104, C60-C114, C78-C129, and C85-C92. N55 is a glycosylation site (N-linked (GlcNAc...) asparagine). Substrate-binding positions include 61–65 (KHQNT) and K86. Residue N100 is glycosylated (N-linked (GlcNAc...) asparagine). Position 105 (R105) interacts with substrate. The active-site Proton donor is the H145.

Belongs to the pancreatic ribonuclease family. Interacts (via N-terminus) with bacterial lipopolysaccharide (LPS).

The protein localises to the secreted. It localises to the lysosome. It is found in the cytoplasmic granule. Its function is as follows. Ribonuclease which shows a preference for the pyrimidines uridine and cytosine. Has potent antibacterial activity against a range of Gram-positive and Gram-negative bacteria, including P.aeruginosa, A.baumanii, M.luteus, S.aureus, E.faecalis, E.faecium, S.saprophyticus and E.coli. Causes loss of bacterial membrane integrity, and also promotes agglutination of Gram-negative bacteria. Probably contributes to urinary tract sterility. Bactericidal activity is independent of RNase activity. The sequence is that of Ribonuclease K6 (RNASE6) from Pongo pygmaeus (Bornean orangutan).